The sequence spans 589 residues: uncharacterized protein (589 aa).

The next 14 membrane-spanning stretches (helical) occupy residues 90-110 (YIVIPGLMLSIFLSALDQTVI), 128-148 (SWIGTAYTLAQTSILPFCGIM), 162-182 (IVLFLFGSAMCGAAQNMLWLV), 189-209 (GIGGGGITSLVTIVIADITPL), 217-237 (GCMGVTWGLASVMGPLIGGAI), 245-265 (WIFFINLPTGGLSLALLIFFL), 284-304 (FVGIITITTGVVLFLVGLNIG), 311-331 (AHANVLCYLIFGILCIAGFVV), 355-375 (VMVTSFLHYYIVSTITYYIPV), 390-410 (VHTLSLAVVSSLLSAVSGMGI), 419-439 (PMIGGWIVLLAGTGSMIAIYY), 448-468 (GFLALTAVGTGNLFQPNLIAV), 483-503 (AFMLLRNMGASVGISMGAVIY), and 545-565 (IRMIWIVNCPVAGVGMLLSFF).

The protein belongs to the major facilitator superfamily. TCR/Tet family.

The protein resides in the membrane. This is an uncharacterized protein from Schizosaccharomyces pombe (strain 972 / ATCC 24843) (Fission yeast).